A 98-amino-acid polypeptide reads, in one-letter code: Aspartyl/glutamyl-tRNA(Asn/Gln) amidotransferase subunit C (98 aa).

It belongs to the GatC family. As to quaternary structure, heterotrimer of A, B and C subunits.

The catalysed reaction is L-glutamyl-tRNA(Gln) + L-glutamine + ATP + H2O = L-glutaminyl-tRNA(Gln) + L-glutamate + ADP + phosphate + H(+). The enzyme catalyses L-aspartyl-tRNA(Asn) + L-glutamine + ATP + H2O = L-asparaginyl-tRNA(Asn) + L-glutamate + ADP + phosphate + 2 H(+). Its function is as follows. Allows the formation of correctly charged Asn-tRNA(Asn) or Gln-tRNA(Gln) through the transamidation of misacylated Asp-tRNA(Asn) or Glu-tRNA(Gln) in organisms which lack either or both of asparaginyl-tRNA or glutaminyl-tRNA synthetases. The reaction takes place in the presence of glutamine and ATP through an activated phospho-Asp-tRNA(Asn) or phospho-Glu-tRNA(Gln). This chain is Aspartyl/glutamyl-tRNA(Asn/Gln) amidotransferase subunit C, found in Beutenbergia cavernae (strain ATCC BAA-8 / DSM 12333 / CCUG 43141 / JCM 11478 / NBRC 16432 / NCIMB 13614 / HKI 0122).